Consider the following 359-residue polypeptide: Lactosylceramide 4-alpha-galactosyltransferase (359 aa).

The Cytoplasmic portion of the chain corresponds to 1-30 (MGISCSHLEETMSKPPDCLLRMLRGTPRQR). A helical; Signal-anchor for type II membrane protein transmembrane segment spans residues 31–51 (VFTFFIISFKFMFLISILIYW). Over 52 to 359 (HTVGAPKDQR…TTHRAMKMYL (308 aa)) the chain is Lumenal. The short motif at 198 to 200 (DTD) is the DXD motif element. Residues Asn209 and Asn315 are each glycosylated (N-linked (GlcNAc...) asparagine).

The protein belongs to the glycosyltransferase 32 family.

The protein localises to the golgi apparatus membrane. It carries out the reaction a beta-D-Gal-(1-&gt;4)-beta-D-Glc-(1&lt;-&gt;1)-Cer(d18:1(4E)) + UDP-alpha-D-galactose = a globoside Gb3Cer (d18:1(4E)) + UDP + H(+). The catalysed reaction is a beta-D-Gal-(1&lt;-&gt;1')-ceramide + UDP-alpha-D-galactose = alpha-D-Gal-(1-&gt;4)-beta-D-Gal-(1&lt;-&gt;1')-Cer + UDP + H(+). Its pathway is glycolipid biosynthesis. Its function is as follows. Catalyzes the transfer of galactose from UDP-alpha-D-galactose to lactosylceramide/beta-D-galactosyl-(1-&gt;4)-beta-D-glucosyl-(1&lt;-&gt;1)-ceramide(d18:1(4E)) to produce globotriaosylceramide/globoside Gb3Cer (d18:1(4E)). Also able to transfer galactose to galactosylceramide/beta-D-Gal-(1&lt;-&gt;1')-Cer. Globoside Gb3Cer is a glycosphingolipid of the globo serie, one of the major types of neutral root structures of glycosphingolipids, that constitute a significant portion of mammalian cell membranes. This is Lactosylceramide 4-alpha-galactosyltransferase from Mus musculus (Mouse).